A 292-amino-acid polypeptide reads, in one-letter code: Diaminopimelate epimerase (292 aa).

Substrate is bound by residues N13, Q46, and N66. C75 acts as the Proton donor in catalysis. Substrate contacts are provided by residues 76-77 (GN), N170, N203, and 221-222 (ER). C230 serves as the catalytic Proton acceptor. 231-232 (GT) contacts substrate.

This sequence belongs to the diaminopimelate epimerase family. As to quaternary structure, homodimer.

It localises to the cytoplasm. The enzyme catalyses (2S,6S)-2,6-diaminopimelate = meso-2,6-diaminopimelate. The protein operates within amino-acid biosynthesis; L-lysine biosynthesis via DAP pathway; DL-2,6-diaminopimelate from LL-2,6-diaminopimelate: step 1/1. Functionally, catalyzes the stereoinversion of LL-2,6-diaminopimelate (L,L-DAP) to meso-diaminopimelate (meso-DAP), a precursor of L-lysine and an essential component of the bacterial peptidoglycan. The polypeptide is Diaminopimelate epimerase (Acidovorax ebreus (strain TPSY) (Diaphorobacter sp. (strain TPSY))).